A 374-amino-acid polypeptide reads, in one-letter code: UDP-N-acetylglucosamine--N-acetylmuramyl-(pentapeptide) pyrophosphoryl-undecaprenol N-acetylglucosamine transferase (374 aa).

Residues 13–15, N124, R165, S193, and Q294 each bind UDP-N-acetyl-alpha-D-glucosamine; that span reads TGG.

It belongs to the glycosyltransferase 28 family. MurG subfamily.

Its subcellular location is the cell inner membrane. The enzyme catalyses di-trans,octa-cis-undecaprenyl diphospho-N-acetyl-alpha-D-muramoyl-L-alanyl-D-glutamyl-meso-2,6-diaminopimeloyl-D-alanyl-D-alanine + UDP-N-acetyl-alpha-D-glucosamine = di-trans,octa-cis-undecaprenyl diphospho-[N-acetyl-alpha-D-glucosaminyl-(1-&gt;4)]-N-acetyl-alpha-D-muramoyl-L-alanyl-D-glutamyl-meso-2,6-diaminopimeloyl-D-alanyl-D-alanine + UDP + H(+). It participates in cell wall biogenesis; peptidoglycan biosynthesis. Cell wall formation. Catalyzes the transfer of a GlcNAc subunit on undecaprenyl-pyrophosphoryl-MurNAc-pentapeptide (lipid intermediate I) to form undecaprenyl-pyrophosphoryl-MurNAc-(pentapeptide)GlcNAc (lipid intermediate II). In Rhizobium etli (strain CIAT 652), this protein is UDP-N-acetylglucosamine--N-acetylmuramyl-(pentapeptide) pyrophosphoryl-undecaprenol N-acetylglucosamine transferase.